Reading from the N-terminus, the 107-residue chain is Putative antitoxin VapB5 (107 aa).

Helical transmembrane passes span 3-23 and 65-85; these read GPVI…ILLA and LIIL…AYLY.

The protein localises to the cell membrane. Its function is as follows. Possibly the antitoxin component of a type II toxin-antitoxin (TA) system. Its cognate toxin is VapC5 (Potential). The protein is Putative antitoxin VapB5 (vapB5) of Methanocaldococcus jannaschii (strain ATCC 43067 / DSM 2661 / JAL-1 / JCM 10045 / NBRC 100440) (Methanococcus jannaschii).